Here is a 478-residue protein sequence, read N- to C-terminus: Shikimate biosynthesis protein AroDE (478 aa).

The interval 1-208 (MLCTTISGPS…LKHHYFYNFA (208 aa)) is 3-dehydroquinate dehydratase. Residues S21, 29–31 (EMR), and 55–57 (AWK) each bind 3-dehydroquinate. H110 (proton donor/acceptor; for 3-dehydroquinate dehydratase activity) is an active-site residue. K133 acts as the Schiff-base intermediate with substrate; for 3-dehydroquinate dehydratase activity in catalysis. 3-dehydroquinate is bound by residues R171 and Q196. The interval 209–478 (SLSAQSPICA…VLASLFSIAP (270 aa)) is shikimate 5-dehydrogenase. A shikimate-binding site is contributed by 226–228 (SIG). The active-site Proton acceptor; for shikimate dehydrogenase activity is K277. The shikimate site is built by N298 and D313. Residues 337-341 (GAGGA), 360-362 (NRT), and G435 each bind NADP(+). Q442 is a shikimate binding site.

In the N-terminal section; belongs to the type-I 3-dehydroquinase family. This sequence in the C-terminal section; belongs to the shikimate dehydrogenase family.

The enzyme catalyses 3-dehydroquinate = 3-dehydroshikimate + H2O. It carries out the reaction shikimate + NADP(+) = 3-dehydroshikimate + NADPH + H(+). It functions in the pathway metabolic intermediate biosynthesis; chorismate biosynthesis; chorismate from D-erythrose 4-phosphate and phosphoenolpyruvate: step 3/7. It participates in metabolic intermediate biosynthesis; chorismate biosynthesis; chorismate from D-erythrose 4-phosphate and phosphoenolpyruvate: step 4/7. In terms of biological role, bifunctional enzyme that catalyzes two sequential steps of the aromatic amino acids biosynthetic pathway. In the first reaction, the AroD domain catalyzes the cis-dehydration of 3-dehydroquinate (DHQ) and introduces the first double bond of the aromatic ring to yield 3-dehydroshikimate; in the second reaction, the AroE domain catalyzes the reversible NADPH linked reduction of 3-dehydroshikimate (DHSA) to yield shikimate (SA). The chain is Shikimate biosynthesis protein AroDE from Chlamydia trachomatis serovar D (strain ATCC VR-885 / DSM 19411 / UW-3/Cx).